We begin with the raw amino-acid sequence, 46 residues long: Defensin-like protein AX1 (46 aa).

Disulfide bonds link Cys-3-Cys-46, Cys-14-Cys-34, Cys-20-Cys-40, and Cys-24-Cys-42.

In terms of tissue distribution, leaves and flowers.

Functionally, strong inhibiting activity against C.beticola and other filamentous fungi. Little or no effect against bacteria. The chain is Defensin-like protein AX1 from Beta vulgaris (Sugar beet).